Reading from the N-terminus, the 118-residue chain is MRVKRGLSGHRRHKKYLTAAKGFRGGRSRLYRTAREAVERSLQYAYVGRKLRKRDFRTLWILRINAGARLSGLSYSRFMHGLKLAGIELNRKVLADLAVYKKDDFAKIVDMAKAALGK.

This sequence belongs to the bacterial ribosomal protein bL20 family.

Functionally, binds directly to 23S ribosomal RNA and is necessary for the in vitro assembly process of the 50S ribosomal subunit. It is not involved in the protein synthesizing functions of that subunit. This is Large ribosomal subunit protein bL20 from Desulfovibrio desulfuricans (strain ATCC 27774 / DSM 6949 / MB).